Reading from the N-terminus, the 488-residue chain is MPEDVQNRTRIKSERYESGVIPYAKMGYWDADYKLKDTDILALFRITPQPGVDPVEAAAAVAGESSTATWTVVWTDLLTACDIYRAKAYRVDPVPGTSDQFFAYIAYECDLFEEGSLANLTASIIGNVFGFKAVKALRLEDMRIPYAYLKTFQGPATGVVVERERLDKFGRPFLGATVKPKLGLSGKNYGRVVYEGLTGGLDFLKDDENINSQPFMRWKERFLYCMEGVNRAAAATGEVKGSYLNITAATVEQMYERAEYAHAIGSVIVMIDLVIGYTAIQSMAIWARKAEVILHLHRAGNSTYARQKNHGINFRVICKWMRMCGVDHIHAGTVVGKLEGDPLMVKGFYNSLLLTHLKINLAEGLFFDMDWASLRKCVPVASGGIHCGQMHQLLYYLGDDVVLQFGGGTIGHPDGIQSGATANRVALESMVLARNEGRDYVGEGPDILRRAASTCGPLKAALDLWKDITFDYTSTDTPDFVEVATGSR.

2 residues coordinate substrate: N127 and T177. K179 (proton acceptor) is an active-site residue. Residue K181 participates in substrate binding. K205, D207, and E208 together coordinate Mg(2+). K205 carries the post-translational modification N6-carboxylysine. H297 functions as the Proton acceptor in the catalytic mechanism. Residues R298, H330, and S382 each coordinate substrate.

The protein belongs to the RuBisCO large chain family. Type I subfamily. As to quaternary structure, heterohexadecamer of 8 large chains and 8 small chains. It depends on Mg(2+) as a cofactor.

The protein resides in the plastid. Its subcellular location is the chloroplast. It carries out the reaction 2 (2R)-3-phosphoglycerate + 2 H(+) = D-ribulose 1,5-bisphosphate + CO2 + H2O. The enzyme catalyses D-ribulose 1,5-bisphosphate + O2 = 2-phosphoglycolate + (2R)-3-phosphoglycerate + 2 H(+). Functionally, ruBisCO catalyzes two reactions: the carboxylation of D-ribulose 1,5-bisphosphate, the primary event in carbon dioxide fixation, as well as the oxidative fragmentation of the pentose substrate in the photorespiration process. Both reactions occur simultaneously and in competition at the same active site. This chain is Ribulose bisphosphate carboxylase large chain, found in Ectocarpus siliculosus (Brown alga).